The chain runs to 335 residues: Glyceraldehyde-3-phosphate dehydrogenase (335 aa).

NAD(+) contacts are provided by residues 12-13, Asp34, and Arg79; that span reads RI. Residues 150–152, Thr181, 210–211, and Arg233 contribute to the D-glyceraldehyde 3-phosphate site; these read SCT and TG. Cys151 serves as the catalytic Nucleophile. Asn315 contributes to the NAD(+) binding site.

This sequence belongs to the glyceraldehyde-3-phosphate dehydrogenase family. In terms of assembly, homotetramer.

It localises to the cytoplasm. The catalysed reaction is D-glyceraldehyde 3-phosphate + phosphate + NAD(+) = (2R)-3-phospho-glyceroyl phosphate + NADH + H(+). It functions in the pathway carbohydrate degradation; glycolysis; pyruvate from D-glyceraldehyde 3-phosphate: step 1/5. This is Glyceraldehyde-3-phosphate dehydrogenase (GPD) from Ogataea parapolymorpha (strain ATCC 26012 / BCRC 20466 / JCM 22074 / NRRL Y-7560 / DL-1) (Yeast).